The primary structure comprises 612 residues: uncharacterized protein (612 aa).

Residues glutamate 39 to glutamate 100 are a coiled coil. Positions proline 219–leucine 241 are disordered. WD repeat units lie at residues threonine 286 to serine 325, glycine 337 to serine 376, glycine 389 to arginine 432, aspartate 434 to glutamine 470, alanine 483 to glutamate 523, isoleucine 526 to glutamate 565, and glutamate 574 to proline 612.

The protein resides in the cytoplasm. This is an uncharacterized protein from Schizosaccharomyces pombe (strain 972 / ATCC 24843) (Fission yeast).